A 37-amino-acid polypeptide reads, in one-letter code: Large ribosomal subunit protein bL36c (37 aa).

Belongs to the bacterial ribosomal protein bL36 family.

It localises to the plastid. The sequence is that of Large ribosomal subunit protein bL36c from Cuscuta gronovii (Common dodder).